We begin with the raw amino-acid sequence, 1439 residues long: Receptor-type tyrosine-protein phosphatase kappa (1439 aa).

The first 26 residues, 1–26 (MDTTAAAALPAFVALLLLSPWPLLGS), serve as a signal peptide directing secretion. The Extracellular portion of the chain corresponds to 27–752 (AQGQFSAGGC…PAKQTDRVVK (726 aa)). The region spanning 31–194 (FSAGGCTFDD…IQVLSYPCDK (164 aa)) is the MAM domain. N101, N140, and N211 each carry an N-linked (GlcNAc...) asparagine glycan. Residues 196-281 (PHFLRLGDVE…TQSERGSGVS (86 aa)) form the Ig-like C2-type domain. Residues C216 and C270 are joined by a disulfide bond. Fibronectin type-III domains lie at 294-389 (PIAP…CAEP), 392-488 (TPKT…TDED), 491-595 (GPVP…SAPT), and 597-680 (PDYE…GNLP). N-linked (GlcNAc...) asparagine glycosylation is found at N416, N424, N436, N462, N552, N586, N590, N607, and N690. Residues 753-774 (IAGISAGILVFILLLLVVILIV) form a helical membrane-spanning segment. Residues 775–1439 (KKSKLAKKRK…DVALEYLESS (665 aa)) lie on the Cytoplasmic side of the membrane. S856 carries the phosphoserine modification. 2 Tyrosine-protein phosphatase domains span residues 887-1141 (FKEE…ILEA) and 1173-1435 (LKDE…ALEY). Substrate-binding positions include D1050, 1082 to 1088 (CSAGAGR), and Q1126. C1082 (phosphocysteine intermediate) is an active-site residue. C1376 serves as the catalytic Phosphocysteine intermediate.

Belongs to the protein-tyrosine phosphatase family. Receptor class 2B subfamily. In terms of processing, this protein undergoes proteolytic processing. High levels in lung, brain and colon; less in liver, pancreas, stomach, kidney, placenta and mammary carcinoma.

The protein localises to the cell junction. Its subcellular location is the adherens junction. It is found in the cell membrane. The catalysed reaction is O-phospho-L-tyrosyl-[protein] + H2O = L-tyrosyl-[protein] + phosphate. In terms of biological role, regulation of processes involving cell contact and adhesion such as growth control, tumor invasion, and metastasis. Negative regulator of EGFR signaling pathway. Forms complexes with beta-catenin and gamma-catenin/plakoglobin. Beta-catenin may be a substrate for the catalytic activity of PTPRK/PTP-kappa. This is Receptor-type tyrosine-protein phosphatase kappa (PTPRK) from Homo sapiens (Human).